The primary structure comprises 324 residues: Tetrachlorobenzoquinone reductase (324 aa).

The region spanning 5–107 is the FAD-binding FR-type domain; that stretch reads VSTIDMTVTQ…VPPANNFALV (103 aa). The 2Fe-2S ferredoxin-type domain occupies 238 to 324; the sequence is FTVVLARRSG…SKSPRLVLDI (87 aa). Residues C273, C278, C281, and C311 each contribute to the [2Fe-2S] cluster site.

Belongs to the PDR/VanB family. Homotrimer. The cofactor is FMN. Requires [2Fe-2S] cluster as cofactor.

The enzyme catalyses 2,3,5,6-tetrachlorohydroquinone + NAD(+) + H(+) = 2,3,5,6-tetrachloro-1,4-benzoquinone + NADH. The protein operates within xenobiotic degradation; pentachlorophenol degradation. With respect to regulation, in vitro, activated by tetrachlorohydroquinone (TCHQ) at low concentrations and inhibited at high concentrations (above 200 uM). However, PcpD would only be stimulated by tetrachlorohydroquinone (TCHQ) under in vivo conditions due to the toxicity of tetrachlorohydroquinone (TCHQ). Competitively inhibited by pentachlorophenol (PCP) in a concentration-dependent manner. PcpD is regulated by tetrachlorohydroquinone (TCHQ) and pentachlorophenol (PCP) using a mechanism, which maintains tetrachlorobenzoquinone at a level that would neither significantly decrease the biodegradation of pentachlorophenol (PCP) nor cause cytotoxicity in cells. Its function is as follows. Involved in the degradation of the xenobiocide pentachlorophenol (PCP). Catalyzes the reduction of tetrachlorobenzoquinone (TCBQ) to yield tetrachlorohydroquinone (TCHQ). Also able to reduce 2,6-dichloroindophenol (DCIP). The polypeptide is Tetrachlorobenzoquinone reductase (Sphingobium chlorophenolicum).